Here is a 410-residue protein sequence, read N- to C-terminus: Aspartic proteinase Asp1 (410 aa).

The N-terminal stretch at 1 to 23 (MTARLALLASLLLLLQLVPPSSA) is a signal peptide. Residues 24 to 46 (VVLELHGNVYPIGHFFITMNIGD) constitute a propeptide, removed in mature form. A Peptidase A1 domain is found at 38–392 (FFITMNIGDP…DSERSLLGWV (355 aa)). Catalysis depends on residues Asp-56 and Asp-257.

Belongs to the peptidase A1 family.

This is Aspartic proteinase Asp1 (ASP1) from Oryza sativa subsp. japonica (Rice).